A 244-amino-acid chain; its full sequence is Lipoprotein-releasing system ATP-binding protein LolD (244 aa).

The 226-residue stretch at 19–244 folds into the ABC transporter domain; it reads IRAEALAKTY…KLRELAPSAV (226 aa). Position 55-62 (55-62) interacts with ATP; it reads GASGAGKS.

Belongs to the ABC transporter superfamily. Lipoprotein translocase (TC 3.A.1.125) family. As to quaternary structure, the complex is composed of two ATP-binding proteins (LolD) and two transmembrane proteins (LolC and LolE).

It is found in the cell inner membrane. Its function is as follows. Part of the ABC transporter complex LolCDE involved in the translocation of mature outer membrane-directed lipoproteins, from the inner membrane to the periplasmic chaperone, LolA. Responsible for the formation of the LolA-lipoprotein complex in an ATP-dependent manner. In Xanthomonas axonopodis pv. citri (strain 306), this protein is Lipoprotein-releasing system ATP-binding protein LolD.